The sequence spans 675 residues: Putative acyl-coenzyme A oxidase 3.2, peroxisomal (675 aa).

Residues 1 to 34 constitute a peroxisome transit peptide; the sequence is MSENVELRRAHILANHILRSPRPSSNPSLTPEVC. Residue 442-457 coordinates FAD; it reads AVGGQGLKTENRVGHL.

The protein belongs to the acyl-CoA oxidase family. FAD is required as a cofactor.

It localises to the peroxisome. The enzyme catalyses a 2,3-saturated acyl-CoA + O2 = a (2E)-enoyl-CoA + H2O2. Catalyzes the desaturation of acyl-CoAs to 2-trans-enoyl-CoAs. The sequence is that of Putative acyl-coenzyme A oxidase 3.2, peroxisomal (ACX3.2) from Arabidopsis thaliana (Mouse-ear cress).